Here is a 305-residue protein sequence, read N- to C-terminus: UDP-3-O-acyl-N-acetylglucosamine deacetylase (305 aa).

Zn(2+) contacts are provided by His78, His237, and Asp241. The active-site Proton donor is His264.

Belongs to the LpxC family. Zn(2+) serves as cofactor.

It carries out the reaction a UDP-3-O-[(3R)-3-hydroxyacyl]-N-acetyl-alpha-D-glucosamine + H2O = a UDP-3-O-[(3R)-3-hydroxyacyl]-alpha-D-glucosamine + acetate. It participates in glycolipid biosynthesis; lipid IV(A) biosynthesis; lipid IV(A) from (3R)-3-hydroxytetradecanoyl-[acyl-carrier-protein] and UDP-N-acetyl-alpha-D-glucosamine: step 2/6. Functionally, catalyzes the hydrolysis of UDP-3-O-myristoyl-N-acetylglucosamine to form UDP-3-O-myristoylglucosamine and acetate, the committed step in lipid A biosynthesis. The protein is UDP-3-O-acyl-N-acetylglucosamine deacetylase of Burkholderia mallei (strain NCTC 10247).